Reading from the N-terminus, the 884-residue chain is Alanine--tRNA ligase (884 aa).

Residues His-572, His-576, Cys-673, and His-677 each coordinate Zn(2+).

It belongs to the class-II aminoacyl-tRNA synthetase family. Zn(2+) serves as cofactor.

Its subcellular location is the cytoplasm. It carries out the reaction tRNA(Ala) + L-alanine + ATP = L-alanyl-tRNA(Ala) + AMP + diphosphate. Its function is as follows. Catalyzes the attachment of alanine to tRNA(Ala) in a two-step reaction: alanine is first activated by ATP to form Ala-AMP and then transferred to the acceptor end of tRNA(Ala). Also edits incorrectly charged Ser-tRNA(Ala) and Gly-tRNA(Ala) via its editing domain. The protein is Alanine--tRNA ligase of Xylella fastidiosa (strain 9a5c).